Consider the following 182-residue polypeptide: UPF0398 protein RBAM_020340 (182 aa).

The protein belongs to the UPF0398 family.

The sequence is that of UPF0398 protein RBAM_020340 from Bacillus velezensis (strain DSM 23117 / BGSC 10A6 / LMG 26770 / FZB42) (Bacillus amyloliquefaciens subsp. plantarum).